Reading from the N-terminus, the 202-residue chain is Glycerol-3-phosphate acyltransferase (202 aa).

Transmembrane regions (helical) follow at residues 2–22, 54–74, 85–105, 118–138, 140–160, and 162–182; these read MIVLMLLLAYIVGSFPSGVII, FVVTFLDIFKGFIVVFFPLLF, FFTNGLIVGVFAILGHVYPIF, AGVVLGVAPILLLILAAIFFL, LYLTKYVSLSSIVAAICCVIG, and LIIHDYILLVVSIIVAILLIF.

It belongs to the PlsY family. As to quaternary structure, probably interacts with PlsX.

The protein localises to the cell membrane. It carries out the reaction an acyl phosphate + sn-glycerol 3-phosphate = a 1-acyl-sn-glycero-3-phosphate + phosphate. Its pathway is lipid metabolism; phospholipid metabolism. In terms of biological role, catalyzes the transfer of an acyl group from acyl-phosphate (acyl-PO(4)) to glycerol-3-phosphate (G3P) to form lysophosphatidic acid (LPA). This enzyme utilizes acyl-phosphate as fatty acyl donor, but not acyl-CoA or acyl-ACP. In Staphylococcus carnosus (strain TM300), this protein is Glycerol-3-phosphate acyltransferase.